A 149-amino-acid polypeptide reads, in one-letter code: Protein FAM72C (149 aa).

This sequence belongs to the FAM72 family.

In Homo sapiens (Human), this protein is Protein FAM72C (FAM72C).